We begin with the raw amino-acid sequence, 166 residues long: Packaging efficiency factor P6 (166 aa).

Residues 134-166 (ILPESAGDQQEAEPVPSVGDQQETAPRKRFRAI) are disordered.

In terms of assembly, heterodimer of P6 and P9; further multimerizes as hexamers of heterodimers. Part of the dodecameric portal complex that is composed of the packaging efficiency factor P6, the DNA packaging ATPase P9, and the internal heterododecamer P20/P22 which spans the virion inner membrane.

The protein resides in the virion. Its function is as follows. Together with the packaging ATPase P9, forms the external part of the portal vertex that is embeded in the capsid and which plays critical roles in genome packaging and genome ejection. Both proteins multimerize as a single ring-shaped heterdodecamer arranged around a central channel. The protein is Packaging efficiency factor P6 (VI) of Acinetobacter calcoaceticus (Arthrobacter siderocapsulatus).